Reading from the N-terminus, the 92-residue chain is Putative regulatory protein CTN_0877 (92 aa).

The protein belongs to the RemA family.

This Thermotoga neapolitana (strain ATCC 49049 / DSM 4359 / NBRC 107923 / NS-E) protein is Putative regulatory protein CTN_0877.